An 86-amino-acid polypeptide reads, in one-letter code: Small ribosomal subunit protein bS16 (86 aa).

It belongs to the bacterial ribosomal protein bS16 family.

The chain is Small ribosomal subunit protein bS16 from Acidithiobacillus ferrooxidans (strain ATCC 23270 / DSM 14882 / CIP 104768 / NCIMB 8455) (Ferrobacillus ferrooxidans (strain ATCC 23270)).